A 1127-amino-acid chain; its full sequence is Structural protein MDM1 (1127 aa).

The PXA domain occupies 85-273; that stretch reads NAQIGKELES…WNLRIVSLSQ (189 aa). Residues S670, S673, and S692 each carry the phosphoserine modification. Positions 705–762 form a coiled coil; sequence SNNFRDNIASLTISIDQIEKELELLRHLILKADLTNNQMQLKILKKSQRTLLKELEMK. Positions 782–905 constitute a PX domain; that stretch reads TKIYIRSYFS…RFLTDPTPFK (124 aa).

It belongs to the sorting nexin family.

The protein localises to the cytoplasm. Functionally, essential for mitotic growth. Mediates organelle inheritance. The chain is Structural protein MDM1 (MDM1) from Saccharomyces cerevisiae (strain ATCC 204508 / S288c) (Baker's yeast).